The primary structure comprises 307 residues: Aspartate carbamoyltransferase catalytic subunit (307 aa).

Positions 59 and 60 each coordinate carbamoyl phosphate. Lysine 87 provides a ligand contact to L-aspartate. Arginine 109, histidine 137, and glutamine 140 together coordinate carbamoyl phosphate. Residues arginine 173 and arginine 223 each coordinate L-aspartate. 2 residues coordinate carbamoyl phosphate: glycine 266 and proline 267.

The protein belongs to the aspartate/ornithine carbamoyltransferase superfamily. ATCase family. In terms of assembly, heterododecamer (2C3:3R2) of six catalytic PyrB chains organized as two trimers (C3), and six regulatory PyrI chains organized as three dimers (R2).

The enzyme catalyses carbamoyl phosphate + L-aspartate = N-carbamoyl-L-aspartate + phosphate + H(+). It participates in pyrimidine metabolism; UMP biosynthesis via de novo pathway; (S)-dihydroorotate from bicarbonate: step 2/3. Catalyzes the condensation of carbamoyl phosphate and aspartate to form carbamoyl aspartate and inorganic phosphate, the committed step in the de novo pyrimidine nucleotide biosynthesis pathway. This Helicobacter pylori (strain HPAG1) protein is Aspartate carbamoyltransferase catalytic subunit.